The chain runs to 145 residues: Putative BCoR-like protein 2 (145 aa).

Over residues 1-27 (MKEKLSKKRAEVKGNRSWLEEFLKPSD) the composition is skewed to basic and acidic residues. The tract at residues 1-58 (MKEKLSKKRAEVKGNRSWLEEFLKPSDNEEGPPPKNKVLSNNASSQKPTHSSCIPLLR) is disordered. The span at 38–52 (VLSNNASSQKPTHSS) shows a compositional bias: polar residues.

Belongs to the BCOR family.

This Homo sapiens (Human) protein is Putative BCoR-like protein 2 (BCORP1).